The sequence spans 274 residues: Diaminopimelate epimerase (274 aa).

Asn-11, Gln-44, and Asn-64 together coordinate substrate. The Proton donor role is filled by Cys-73. Residues Gly-74 to Asn-75, Asn-157, Asn-190, and Glu-208 to Arg-209 contribute to the substrate site. The Proton acceptor role is filled by Cys-217. Gly-218–Ser-219 contributes to the substrate binding site.

This sequence belongs to the diaminopimelate epimerase family. Homodimer.

The protein resides in the cytoplasm. It carries out the reaction (2S,6S)-2,6-diaminopimelate = meso-2,6-diaminopimelate. Its pathway is amino-acid biosynthesis; L-lysine biosynthesis via DAP pathway; DL-2,6-diaminopimelate from LL-2,6-diaminopimelate: step 1/1. Functionally, catalyzes the stereoinversion of LL-2,6-diaminopimelate (L,L-DAP) to meso-diaminopimelate (meso-DAP), a precursor of L-lysine and an essential component of the bacterial peptidoglycan. This chain is Diaminopimelate epimerase, found in Escherichia fergusonii (strain ATCC 35469 / DSM 13698 / CCUG 18766 / IAM 14443 / JCM 21226 / LMG 7866 / NBRC 102419 / NCTC 12128 / CDC 0568-73).